A 98-amino-acid polypeptide reads, in one-letter code: NADH-ubiquinone oxidoreductase chain 4L (98 aa).

Transmembrane regions (helical) follow at residues Met1–Ile21, Leu26–Leu46, and Leu61–Val81.

The protein belongs to the complex I subunit 4L family. In terms of assembly, core subunit of respiratory chain NADH dehydrogenase (Complex I) which is composed of 45 different subunits.

The protein resides in the mitochondrion inner membrane. The catalysed reaction is a ubiquinone + NADH + 5 H(+)(in) = a ubiquinol + NAD(+) + 4 H(+)(out). Core subunit of the mitochondrial membrane respiratory chain NADH dehydrogenase (Complex I) which catalyzes electron transfer from NADH through the respiratory chain, using ubiquinone as an electron acceptor. Part of the enzyme membrane arm which is embedded in the lipid bilayer and involved in proton translocation. This is NADH-ubiquinone oxidoreductase chain 4L (MT-ND4L) from Nycticebus coucang (Slow loris).